The chain runs to 386 residues: Lipoyl synthase, mitochondrial (386 aa).

The N-terminal 21 residues, 1 to 21 (MISRNSILLRRLYPTTIIRTL), are a transit peptide targeting the mitochondrion. [4Fe-4S] cluster-binding residues include Cys107, Cys112, Cys118, Cys137, Cys141, Cys144, and Ser352. In terms of domain architecture, Radical SAM core spans 122-341 (KKSEATATIM…RDTALDMGFL (220 aa)).

Belongs to the radical SAM superfamily. Lipoyl synthase family. It depends on [4Fe-4S] cluster as a cofactor.

It is found in the mitochondrion. It catalyses the reaction [[Fe-S] cluster scaffold protein carrying a second [4Fe-4S](2+) cluster] + N(6)-octanoyl-L-lysyl-[protein] + 2 oxidized [2Fe-2S]-[ferredoxin] + 2 S-adenosyl-L-methionine + 4 H(+) = [[Fe-S] cluster scaffold protein] + N(6)-[(R)-dihydrolipoyl]-L-lysyl-[protein] + 4 Fe(3+) + 2 hydrogen sulfide + 2 5'-deoxyadenosine + 2 L-methionine + 2 reduced [2Fe-2S]-[ferredoxin]. Its pathway is protein modification; protein lipoylation via endogenous pathway; protein N(6)-(lipoyl)lysine from octanoyl-[acyl-carrier-protein]: step 2/2. Catalyzes the radical-mediated insertion of two sulfur atoms into the C-6 and C-8 positions of the octanoyl moiety bound to the lipoyl domains of lipoate-dependent enzymes, thereby converting the octanoylated domains into lipoylated derivatives. This Candida albicans (strain SC5314 / ATCC MYA-2876) (Yeast) protein is Lipoyl synthase, mitochondrial (LAB5).